Here is a 224-residue protein sequence, read N- to C-terminus: Prophage repressor CohE (224 aa).

The polypeptide is Prophage repressor CohE (cohE) (Escherichia coli (strain K12)).